Reading from the N-terminus, the 219-residue chain is uncharacterized protein (219 aa).

Residues 13-32 traverse the membrane as a helical segment; it reads VFGLFLFSLIFFGLLSLATF.

The protein localises to the membrane. This is an uncharacterized protein from Aquifex aeolicus (strain VF5).